Here is a 197-residue protein sequence, read N- to C-terminus: Probable GTP-binding protein EngB (197 aa).

Positions 22–197 (TGVEVAFAGR…FKEKLDTWYQ (176 aa)) constitute an EngB-type G domain. GTP-binding positions include 30–37 (GRSNAGKS), 57–61 (GRTQL), 75–78 (DLPG), 142–145 (TKAD), and 177–179 (FSS). Mg(2+)-binding residues include S37 and T59.

It belongs to the TRAFAC class TrmE-Era-EngA-EngB-Septin-like GTPase superfamily. EngB GTPase family. Mg(2+) is required as a cofactor.

In terms of biological role, necessary for normal cell division and for the maintenance of normal septation. The polypeptide is Probable GTP-binding protein EngB (Francisella tularensis subsp. tularensis (strain FSC 198)).